The chain runs to 131 residues: Large ribosomal subunit protein bL12 (131 aa).

Belongs to the bacterial ribosomal protein bL12 family. In terms of assembly, homodimer. Part of the ribosomal stalk of the 50S ribosomal subunit. Forms a multimeric L10(L12)X complex, where L10 forms an elongated spine to which 2 to 4 L12 dimers bind in a sequential fashion. Binds GTP-bound translation factors.

Its function is as follows. Forms part of the ribosomal stalk which helps the ribosome interact with GTP-bound translation factors. Is thus essential for accurate translation. The sequence is that of Large ribosomal subunit protein bL12 from Prochlorococcus marinus subsp. pastoris (strain CCMP1986 / NIES-2087 / MED4).